A 288-amino-acid chain; its full sequence is Phenazine biosynthesis-like domain-containing protein 1 (288 aa).

Glu-46 is a catalytic residue.

Belongs to the PhzF family.

The polypeptide is Phenazine biosynthesis-like domain-containing protein 1 (Pbld1) (Mus musculus (Mouse)).